Here is a 380-residue protein sequence, read N- to C-terminus: 3-dehydroquinate synthase (380 aa).

The protein belongs to the archaeal-type DHQ synthase family.

The catalysed reaction is 2-amino-2,3,7-trideoxy-D-lyxo-hept-6-ulosonate + NAD(+) + H2O = 3-dehydroquinate + NH4(+) + NADH + H(+). Its function is as follows. Catalyzes the oxidative deamination and cyclization of 2-amino-3,7-dideoxy-D-threo-hept-6-ulosonic acid (ADH) to yield 3-dehydroquinate (DHQ), which is fed into the canonical shikimic pathway of aromatic amino acid biosynthesis. This is 3-dehydroquinate synthase from Methanosarcina barkeri (strain Fusaro / DSM 804).